We begin with the raw amino-acid sequence, 475 residues long: Ribulose bisphosphate carboxylase large chain (475 aa).

Residues 1–2 (MS) constitute a propeptide that is removed on maturation. Proline 3 is subject to N-acetylproline. Lysine 14 is modified (N6,N6,N6-trimethyllysine). Asparagine 123 and threonine 173 together coordinate substrate. Catalysis depends on lysine 175, which acts as the Proton acceptor. Substrate is bound at residue lysine 177. Positions 201, 203, and 204 each coordinate Mg(2+). Lysine 201 bears the N6-carboxylysine mark. The Proton acceptor role is filled by histidine 294. Substrate contacts are provided by arginine 295, histidine 327, and serine 379.

Belongs to the RuBisCO large chain family. Type I subfamily. Heterohexadecamer of 8 large chains and 8 small chains; disulfide-linked. The disulfide link is formed within the large subunit homodimers. Requires Mg(2+) as cofactor. The disulfide bond which can form in the large chain dimeric partners within the hexadecamer appears to be associated with oxidative stress and protein turnover.

The protein localises to the plastid. Its subcellular location is the chloroplast. It catalyses the reaction 2 (2R)-3-phosphoglycerate + 2 H(+) = D-ribulose 1,5-bisphosphate + CO2 + H2O. The enzyme catalyses D-ribulose 1,5-bisphosphate + O2 = 2-phosphoglycolate + (2R)-3-phosphoglycerate + 2 H(+). Its function is as follows. RuBisCO catalyzes two reactions: the carboxylation of D-ribulose 1,5-bisphosphate, the primary event in carbon dioxide fixation, as well as the oxidative fragmentation of the pentose substrate in the photorespiration process. Both reactions occur simultaneously and in competition at the same active site. The polypeptide is Ribulose bisphosphate carboxylase large chain (Cryptomeria japonica (Japanese cedar)).